We begin with the raw amino-acid sequence, 856 residues long: Dual specificity protein kinase TTK (856 aa).

Position 1 is an N-acetylmethionine (methionine 1). Threonine 32 is subject to Phosphothreonine. Residues serine 36, serine 277, and serine 342 each carry the phosphoserine modification. Threonine 380 bears the Phosphothreonine mark. A phosphoserine mark is found at serine 383, serine 435, and serine 454. In terms of domain architecture, Protein kinase spans 524–790 (YSILKQIGSG…IPELLTHPYV (267 aa)). Residues 530 to 538 (IGSGGSSKV) and lysine 552 contribute to the ATP site. Aspartate 646 (proton acceptor) is an active-site residue. Residue serine 820 is modified to Phosphoserine. Residues 837 to 856 (CGEGQDSSSSKTFDKKRERK) form a disordered region.

It belongs to the protein kinase superfamily. Ser/Thr protein kinase family. In terms of assembly, interacts with TPR; the interactions occurs in a microtubule-independent manner. Interacts with MAD1L1 and MAD2L1. Autophosphorylated. As to expression, present in rapidly proliferating cell lines; high levels in testis, bone marrow, spleen and thymus. Low levels in brain, heart, lung and kidney.

The catalysed reaction is L-seryl-[protein] + ATP = O-phospho-L-seryl-[protein] + ADP + H(+). It carries out the reaction L-threonyl-[protein] + ATP = O-phospho-L-threonyl-[protein] + ADP + H(+). It catalyses the reaction L-tyrosyl-[protein] + ATP = O-phospho-L-tyrosyl-[protein] + ADP + H(+). With respect to regulation, inhibited by the ATP-competitive kinase inhibitor, SP600125. Functionally, involved in mitotic spindle assembly checkpoint signaling, a process that delays anaphase until chromosomes are bioriented on the spindle, and in the repair of incorrect mitotic kinetochore-spindle microtubule attachments. Phosphorylates MAD1L1 to promote the mitotic spindle assembly checkpoint. Phosphorylates CDCA8/Borealin leading to enhanced AURKB activity at the kinetochore. Phosphorylates SKA3 at 'Ser-34' leading to dissociation of the SKA complex from microtubules and destabilization of microtubule-kinetochore attachments. Phosphorylates KNL1, KNTC1 and autophosphorylates. Phosphorylates MCRS1 which enhances recruitment of KIF2A to the minus end of spindle microtubules and promotes chromosome alignment. This Mus musculus (Mouse) protein is Dual specificity protein kinase TTK (Ttk).